The chain runs to 187 residues: Chromophore lyase CpcS/CpeS 2 (187 aa).

The protein belongs to the CpcS/CpeS biliprotein lyase family.

Functionally, covalently attaches a chromophore to Cys residue(s) of phycobiliproteins. The sequence is that of Chromophore lyase CpcS/CpeS 2 from Synechococcus sp. (strain JA-3-3Ab) (Cyanobacteria bacterium Yellowstone A-Prime).